Reading from the N-terminus, the 637-residue chain is Multicopper oxidase LPR1 homolog 5 (637 aa).

The first 21 residues, 1–21 (MSPRIQQLAAVLLAAVVVVAA), serve as a signal peptide directing secretion. Residue Asn-100 is glycosylated (N-linked (GlcNAc...) asparagine). Cu cation-binding residues include His-209 and His-211. N-linked (GlcNAc...) asparagine glycosylation is present at Asn-234. Residues His-257 and His-259 each coordinate Cu cation. Residues Asn-308, Asn-349, Asn-357, Asn-425, Asn-482, and Asn-516 are each glycosylated (N-linked (GlcNAc...) asparagine). One can recognise a Plastocyanin-like domain in the interval 334 to 406 (PYLSVQRRRY…IVDFSRLPAA (73 aa)). 3 residues coordinate Cu cation: His-522, His-525, and His-527. An N-linked (GlcNAc...) asparagine glycan is attached at Asn-553. Cu cation is bound by residues His-618, Cys-619, His-620, His-624, and Met-629.

Belongs to the multicopper oxidase family. Cu cation is required as a cofactor. In terms of tissue distribution, highly expressed in roots and basal stems.

The protein resides in the endoplasmic reticulum membrane. Functionally, multicopper oxidase that may play a role in the maintenance of inorganic phosphate homeostasis. In Oryza sativa subsp. japonica (Rice), this protein is Multicopper oxidase LPR1 homolog 5.